We begin with the raw amino-acid sequence, 1003 residues long: Helicase MOV-10 (1003 aa).

Lys-148 carries the N6-acetyllysine modification. Residues Thr-160 and Thr-254 each carry the phosphothreonine modification. The residue at position 432 (Ser-432) is a Phosphoserine. An ATP-binding site is contributed by 524 to 531 (GPPGTGKT). Residues 645-648 (DEAG) carry the DEAG box motif. The segment at 921–965 (NPLLLGHDPDWKVFLEFCKENGGYTGCPFPAKLDLQQGQNLLQGL) is interaction with AGO2 and APOBEC3G. The disordered stretch occupies residues 966-1003 (SKLSPSTSGPHSHDYLPQEREGEGGLSLQVEPEWRNEL). Phosphoserine is present on residues Ser-969 and Ser-977. Residues 976-988 (HSHDYLPQEREGE) are compositionally biased toward basic and acidic residues.

It belongs to the DNA2/NAM7 helicase family. SDE3 subfamily. Interacts with DICER1, AGO2, TARBP2, EIF6 and RPL7A (60S ribosome subunit); they form a large RNA-induced silencing complex (RISC). Interacts with APOBEC3G in an RNA-dependent manner. Interacts with TRIM71 (via NHL repeats) in an RNA-dependent manner. Interacts with both protein products of LIRE1, ORF1p and ORF2p. Interacts with TUT4 and, to a lesser extent, TUT7; the interactions are RNA-dependent. Interacts with AGO2, TNRC6B and UPF1; the interactions are direct and RNA-dependent. Interacts with FMR1; this interaction is direct, occurs in an RNA-dependent manner on polysomes and induces association of MOV10 with RNAs. Interacts with SHFL; the interaction increases in presence of RNA. Interacts with DHX34; the interaction is RNA-independent. Interacts with IKBKE. Interacts with RBM46. In terms of assembly, (Microbial infection) Interacts with the human hepatitis delta virus (HDV) antigen HDAg. As to quaternary structure, (Microbial infection) Interacts with HIV-1 protein GAG. Post-translationally, ubiquitinated by the DCX(DCAF12) complex that specifically recognizes the glutamate-leucine (Glu-Leu) degron at the C-terminus, leading to its degradation. (Microbial infection) Cleaved and targeted for degradation by picornavirus proteases.

It localises to the cytoplasm. Its subcellular location is the P-body. The protein resides in the cytoplasmic ribonucleoprotein granule. The protein localises to the stress granule. It is found in the nucleus. It carries out the reaction ATP + H2O = ADP + phosphate + H(+). Functionally, 5' to 3' RNA helicase that is involved in a number of cellular roles ranging from mRNA metabolism and translation, modulation of viral infectivity, inhibition of retrotransposition, or regulation of synaptic transmission. Plays an important role in innate antiviral immunity by promoting type I interferon production. Mechanistically, specifically uses IKKepsilon/IKBKE as the mediator kinase for IRF3 activation. Blocks HIV-1 virus replication at a post-entry step. Counteracts HIV-1 Vif-mediated degradation of APOBEC3G through its helicase activity by interfering with the ubiquitin-proteasome pathway. Also inhibits hepatitis B virus/HBV replication by interacting with HBV RNA and thereby inhibiting the early step of viral reverse transcription. Contributes to UPF1 mRNA target degradation by translocation along 3' UTRs. Required for microRNA (miRNA)-mediated gene silencing by the RNA-induced silencing complex (RISC). Required for both miRNA-mediated translational repression and miRNA-mediated cleavage of complementary mRNAs by RISC. In cooperation with FMR1, regulates miRNA-mediated translational repression by AGO2. Restricts retrotransposition of long interspersed element-1 (LINE-1) in cooperation with TUT4 and TUT7 counteracting the RNA chaperonne activity of L1RE1. Facilitates LINE-1 uridylation by TUT4 and TUT7. Required for embryonic viability and for normal central nervous system development and function. Plays two critical roles in early brain development: suppresses retroelements in the nucleus by directly inhibiting cDNA synthesis, while regulates cytoskeletal mRNAs to influence neurite outgrowth in the cytosol. May function as a messenger ribonucleoprotein (mRNP) clearance factor. In terms of biological role, (Microbial infection) Required for RNA-directed transcription and replication of the human hepatitis delta virus (HDV). Interacts with small capped HDV RNAs derived from genomic hairpin structures that mark the initiation sites of RNA-dependent HDV RNA transcription. The protein is Helicase MOV-10 of Homo sapiens (Human).